Reading from the N-terminus, the 446-residue chain is Protein adenylyltransferase FICD (446 aa).

Topologically, residues 1–18 (MAVTECEWASLGSRIGLR) are cytoplasmic. The helical; Signal-anchor for type II membrane protein transmembrane segment at 19–39 (AALVLLSGSLLVVLFPLSGLE) threads the bilayer. The Lumenal portion of the chain corresponds to 40-446 (HQYRTALNIL…ECKQTITIKT (407 aa)). 2 TPR repeats span residues 94-127 (AKAA…DPDH) and 128-161 (VDAL…SPHN). The Inhibitory (S/T)XXXE(G/N) motif motif lies at 218–223 (TVAIEG). Glu222 provides a ligand contact to ATP. Asn263 carries N-linked (GlcNAc...) asparagine glycosylation. A Fido domain is found at 273 to 408 (VTIDNILEIH…VRPFIRFIAK (136 aa)). Position 304–307 (304–307 (VGHH)) interacts with ATP. His351 is an active-site residue. ATP contacts are provided by residues 355-362 (DGNGRTSR), 387-388 (YY), and Asn395.

Belongs to the fic family. In terms of assembly, homodimer. It depends on Mg(2+) as a cofactor. Mn(2+) is required as a cofactor.

It localises to the endoplasmic reticulum membrane. The catalysed reaction is L-tyrosyl-[protein] + ATP = O-(5'-adenylyl)-L-tyrosyl-[protein] + diphosphate. It carries out the reaction 3-O-(5'-adenylyl)-L-threonyl-[protein] + H2O = L-threonyl-[protein] + AMP + H(+). The enzyme catalyses L-threonyl-[protein] + ATP = 3-O-(5'-adenylyl)-L-threonyl-[protein] + diphosphate. The side chain of Glu-222 determines which of the two opposing activities (AMPylase or de-AMPylase) will take place. In response to endoplasmic reticulum stress, mediates de-AMPylase activity. Adenylyltransferase activity is inhibited by the inhibitory helix present at the N-terminus: Glu-222 binds ATP and competes with ATP-binding at Arg-362, thereby preventing adenylyltransferase activity. In unstressed cells, disengagement of Glu-222 promotes adenylyltransferase activity. Activation dissociates ATP-binding from Glu-222, allowing ordered binding of the entire ATP moiety with the alpha-phosphate in an orientation that is productive for accepting an incoming target hydroxyl side chain. Functionally, protein that can both mediate the addition of adenosine 5'-monophosphate (AMP) to specific residues of target proteins (AMPylation), and the removal of the same modification from target proteins (de-AMPylation), depending on the context. The side chain of Glu-222 determines which of the two opposing activities (AMPylase or de-AMPylase) will take place. Acts as a key regulator of the ERN1/IRE1-mediated unfolded protein response (UPR) by mediating AMPylation or de-AMPylation of HSPA5/BiP. In unstressed cells, acts as an adenylyltransferase by mediating AMPylation of HSPA5/BiP at 'Thr-518', thereby inactivating it. In response to endoplasmic reticulum stress, acts as a phosphodiesterase by mediating removal of ATP (de-AMPylation) from HSPA5/BiP at 'Thr-518', leading to restore HSPA5/BiP activity. The protein is Protein adenylyltransferase FICD of Xenopus tropicalis (Western clawed frog).